The following is a 227-amino-acid chain: uncharacterized protein (227 aa).

The first 23 residues, M1 to A23, serve as a signal peptide directing secretion. Residues N36–K227 enclose the VWFA domain.

This sequence to B.subtilis YwmD.

This is an uncharacterized protein from Bacillus subtilis (strain 168).